A 124-amino-acid chain; its full sequence is Holo-[acyl-carrier-protein] synthase (124 aa).

D8 and E55 together coordinate Mg(2+).

Belongs to the P-Pant transferase superfamily. AcpS family. Mg(2+) serves as cofactor.

Its subcellular location is the cytoplasm. It catalyses the reaction apo-[ACP] + CoA = holo-[ACP] + adenosine 3',5'-bisphosphate + H(+). In terms of biological role, transfers the 4'-phosphopantetheine moiety from coenzyme A to a Ser of acyl-carrier-protein. This Desulfovibrio desulfuricans (strain ATCC 27774 / DSM 6949 / MB) protein is Holo-[acyl-carrier-protein] synthase.